Consider the following 653-residue polypeptide: Intermembrane lipid transfer protein vps13l (653 aa).

A B box-type zinc finger spans residues 5 to 49 (ISELKCQQHDKLVTIYCCACDAYFCKKCDKEKHSQDDNQEDSLHI). Zn(2+) is bound by residues cysteine 10, histidine 13, cysteine 32, and histidine 37. Disordered regions lie at residues 159–232 (NLID…NRKK), 248–420 (HILN…EDDS), and 627–653 (EKSNNNNNNNNLDSDSEGETYVNPNEN). Over residues 195–213 (SPSPSRSSESNSTTNNNNN) the composition is skewed to low complexity. Over residues 266 to 277 (DYDDDDDNDDDN) the composition is skewed to acidic residues. A compositionally biased stretch (low complexity) spans 278–293 (NNNNNNNNNNNNNNNN). Over residues 314–330 (ETEKEIENVENKIDNKP) the composition is skewed to basic and acidic residues. The segment covering 366–381 (IFEEEEEEEEDEDEVG) has biased composition (acidic residues).

It belongs to the VPS13 family.

The protein localises to the membrane. Functionally, mediates the transfer of lipids between membranes at organelle contact sites. The sequence is that of Intermembrane lipid transfer protein vps13l (vps13l) from Dictyostelium discoideum (Social amoeba).